The primary structure comprises 394 residues: Cell adhesion molecule 3 (394 aa).

The signal sequence occupies residues 1 to 17 (MHHPVILLLCLSSLAGA). Residues 18 to 326 (ANLPPEDLSQ…PIPSTSSIDH (309 aa)) lie on the Extracellular side of the membrane. One can recognise an Ig-like V-type domain in the interval 22–120 (PEDLSQPVTA…PVRTAKAVVT (99 aa)). Cystine bridges form between C45–C105 and C147–C204. Ig-like C2-type domains follow at residues 128-223 (PQVS…HKIQ) and 228-306 (PTAK…TFIT). The interval 217–240 (SSSHKIQVQYKPTAKIESRPSMPR) is disordered. Basic and acidic residues predominate over residues 230-240 (AKIESRPSMPR). A disulfide bridge connects residues C249 and C295. A helical membrane pass occupies residues 327 to 347 (AVIGGVVAVIAFLLFCLLIVL). The Cytoplasmic portion of the chain corresponds to 348 to 394 (GRYLIRHKGTYLTHEAKGSDDAPDADTAIINAEGGQGGSDDKKEYFI). Residues 363 to 394 (AKGSDDAPDADTAIINAEGGQGGSDDKKEYFI) are disordered.

Belongs to the nectin family.

The protein resides in the cell membrane. The protein localises to the cell junction. Its function is as follows. May be involved in cell-cell adhesion. This chain is Cell adhesion molecule 3 (cadm3), found in Xenopus laevis (African clawed frog).